Consider the following 198-residue polypeptide: Holliday junction branch migration complex subunit RuvA (198 aa).

A domain I region spans residues 1 to 63 (MYDYIKGQLT…EDAHLLFGFH (63 aa)). The interval 64 to 142 (TEDEKDVFLK…EAPQETGHTK (79 aa)) is domain II. The tract at residues 143-147 (ARSNK) is flexible linker. The domain III stretch occupies residues 148-198 (AGNTQLDEAIEALLALGYKAKELKKIRAFFEGTSETAEQYIKSALKLLMKG).

This sequence belongs to the RuvA family. As to quaternary structure, homotetramer. Forms an RuvA(8)-RuvB(12)-Holliday junction (HJ) complex. HJ DNA is sandwiched between 2 RuvA tetramers; dsDNA enters through RuvA and exits via RuvB. An RuvB hexamer assembles on each DNA strand where it exits the tetramer. Each RuvB hexamer is contacted by two RuvA subunits (via domain III) on 2 adjacent RuvB subunits; this complex drives branch migration. In the full resolvosome a probable DNA-RuvA(4)-RuvB(12)-RuvC(2) complex forms which resolves the HJ.

It localises to the cytoplasm. Its function is as follows. The RuvA-RuvB-RuvC complex processes Holliday junction (HJ) DNA during genetic recombination and DNA repair, while the RuvA-RuvB complex plays an important role in the rescue of blocked DNA replication forks via replication fork reversal (RFR). RuvA specifically binds to HJ cruciform DNA, conferring on it an open structure. The RuvB hexamer acts as an ATP-dependent pump, pulling dsDNA into and through the RuvAB complex. HJ branch migration allows RuvC to scan DNA until it finds its consensus sequence, where it cleaves and resolves the cruciform DNA. This chain is Holliday junction branch migration complex subunit RuvA, found in Streptococcus pyogenes serotype M1.